Consider the following 832-residue polypeptide: Armadillo segment polarity protein (832 aa).

Polar residues predominate over residues 1 to 20 (MSYQMPQNRTMSHNPYNSSD). Residues 1-24 (MSYQMPQNRTMSHNPYNSSDMPMP) are disordered. ARM repeat units lie at residues 146–185 (NYQD…QLSK), 188–228 (ASRH…NLSH), 230–269 (RQGL…NLLL), 272–311 (DGSK…ILAY), 356–395 (SSNK…NLSD), 397–434 (ATKV…NLTC), 483–524 (SESA…NLAL), 594–634 (ELNR…ELAV), and 636–675 (KEVA…KMSE). Residues 721-832 (AYEGLYGQGP…QVAAWYDTDL (112 aa)) are disordered. Residues 767–777 (PAGSNPNAGNN) show a composition bias toward low complexity.

This sequence belongs to the beta-catenin family.

The protein localises to the cytoplasm. The protein resides in the cell membrane. Its subcellular location is the cell junction. It localises to the adherens junction. Its function is as follows. May associate with CadN and participate in the transmission of developmental information. Can associate with alpha-catenin. Accumulates through wg signaling; arm function in wg signal transduction is required early in development for determination of neuroblast fate. Arm and Abl proteins function cooperatively at adherens junctions in both the CNS and epidermis. The sequence is that of Armadillo segment polarity protein from Aedes aegypti (Yellowfever mosquito).